The sequence spans 389 residues: Succinate--CoA ligase [ADP-forming] subunit beta (389 aa).

Residues 9–244 (KQILRKYGIP…PSQMSNNEAR (236 aa)) form the ATP-grasp domain. Residues Lys-46, 53–55 (GRG), Ile-102, and Glu-107 each bind ATP. 2 residues coordinate Mg(2+): Asn-199 and Asp-213. Substrate is bound by residues Asn-264 and 321–323 (GIM).

Belongs to the succinate/malate CoA ligase beta subunit family. In terms of assembly, heterotetramer of two alpha and two beta subunits. Mg(2+) serves as cofactor.

The enzyme catalyses succinate + ATP + CoA = succinyl-CoA + ADP + phosphate. The catalysed reaction is GTP + succinate + CoA = succinyl-CoA + GDP + phosphate. The protein operates within carbohydrate metabolism; tricarboxylic acid cycle; succinate from succinyl-CoA (ligase route): step 1/1. Succinyl-CoA synthetase functions in the citric acid cycle (TCA), coupling the hydrolysis of succinyl-CoA to the synthesis of either ATP or GTP and thus represents the only step of substrate-level phosphorylation in the TCA. The beta subunit provides nucleotide specificity of the enzyme and binds the substrate succinate, while the binding sites for coenzyme A and phosphate are found in the alpha subunit. The polypeptide is Succinate--CoA ligase [ADP-forming] subunit beta (Protochlamydia amoebophila (strain UWE25)).